The primary structure comprises 397 residues: Methyltransferase/ribosomally synthesized type I borosin cyclic peptide precursor mroMa1 (397 aa).

The methyltransferase domain stretch occupies residues 1–246 (MALKKPGSLT…TTSTFYVPPR (246 aa)). Catalysis depends on residues Arg70, Tyr74, and Tyr96. S-adenosyl-L-methionine contacts are provided by Tyr96, His98, Val101, Ala128, Gln170, Gly208, Ser239, and Thr240. The tract at residues 247-365 (TPAPIDPKAV…GPIFVVMRQL (119 aa)) is clasp domain. Residues 366 to 388 (PSAIASGQEPSQEEIARADDATA) are precursor leader. An N-methylisoleucine mark is found at Ile391 and Ile392. Tyr393 is modified (N-methyltyrosine). Position 394 is an N-methylisoleucine (Ile394). Val395 is subject to N-methylvaline.

This sequence in the N-terminal section; belongs to the precorrin methyltransferase family. Homodimer. Post-translationally, mroMA automethylates at Ile-391, Ile-392, Tyr-393, Ile-394 and Val-395 before being processed by the a prolyloligopeptidase which likely forms a peptidyl ester upon removal of the follower propeptide, which then undergoes macrocyclization with the N-terminus of the modified core peptide. Peptide backbone alpha-N-methylations change the physicochemical properties of amide bonds to provide structural constraints and other favorable characteristics including biological membrane permeability to peptides.

It participates in secondary metabolite biosynthesis. Its function is as follows. Fusion protein of the methyltransferase mroM1 and a type I borosin core peptide; part of the gene cluster that mediates the biosynthesis of a type I borosin, a highly methylated cyclic peptide with potent biological activities. Type I borosins derive from the C-terminus of the fusion protein, and it is the same protein that methylates its own C-terminus using S-adenosyl methionine (SAM). The C-terminus is subsequently cleaved off and macrocyclized by a prolyloligopeptidase to give the final product. This Mycena rosella (Pink bonnet) protein is Methyltransferase/ribosomally synthesized type I borosin cyclic peptide precursor mroMa1.